The sequence spans 227 residues: Ribonuclease 3 (227 aa).

The RNase III domain maps to 3 to 130 (TNAISKIIKY…LIGAIYLDGG (128 aa)). Glutamate 43 contributes to the Mg(2+) binding site. Aspartate 47 is an active-site residue. 2 residues coordinate Mg(2+): asparagine 116 and glutamate 119. The active site involves glutamate 119. The DRBM domain occupies 155–224 (DAKTILQEWA…ASLMLAKINY (70 aa)).

Belongs to the ribonuclease III family. As to quaternary structure, homodimer. It depends on Mg(2+) as a cofactor.

It localises to the cytoplasm. The catalysed reaction is Endonucleolytic cleavage to 5'-phosphomonoester.. In terms of biological role, digests double-stranded RNA. Involved in the processing of primary rRNA transcript to yield the immediate precursors to the large and small rRNAs (23S and 16S). Processes some mRNAs, and tRNAs when they are encoded in the rRNA operon. Processes pre-crRNA and tracrRNA of type II CRISPR loci if present in the organism. The polypeptide is Ribonuclease 3 (Ehrlichia ruminantium (strain Welgevonden)).